The following is a 208-amino-acid chain: 28 kDa heat- and acid-stable phosphoprotein homolog (208 aa).

2 disordered regions span residues 1–133 (MAGG…VTKK) and 145–208 (LSRR…LGLA). Positions 16–44 (FGRDYERSKGKISRDRVYDEEDIIKRNQE) are enriched in basic and acidic residues. Low complexity-rich tracts occupy residues 52–69 (GSES…NKSK) and 84–100 (RNPN…PTTK). The span at 105-121 (SDSEDDSDKESDSEDEI) shows a compositional bias: acidic residues. Residues 137–206 (INVNAKVELS…EKMAERRRLG (70 aa)) are a coiled coil. 2 stretches are compositionally biased toward basic and acidic residues: residues 145-154 (LSRREKEELA) and 162-208 (QNEK…LGLA).

It belongs to the PDAP1 family.

This is 28 kDa heat- and acid-stable phosphoprotein homolog from Dictyostelium discoideum (Social amoeba).